Consider the following 454-residue polypeptide: G-protein coupled receptor 39 (454 aa).

Residues 1–34 (MASPSHPSRDCSQVIDHSHVPEFEVATWIKITLI) are Extracellular-facing. Disulfide bonds link cysteine 11/cysteine 191 and cysteine 108/cysteine 210. Residues histidine 17 and histidine 19 each coordinate Zn(2+). The helical transmembrane segment at 35–55 (LVYLVIFVVGILGNSVTIRVT) threads the bilayer. At 56–69 (QVLQKKGYLQKEVT) the chain is on the cytoplasmic side. A helical transmembrane segment spans residues 70–89 (DHMVSLACSDILVFLIGMPM). Topologically, residues 90–109 (EFYSIIWNPLTTPSYTVSCK) are extracellular. A helical transmembrane segment spans residues 110–131 (VHTFLFEACSYATLLHVLTLSF). Over 132–151 (ERYIAICHPFRYKAMSGPCQ) the chain is Cytoplasmic. A helical membrane pass occupies residues 152–172 (VKLLIGFVWVTSALVALPLLF). The Extracellular portion of the chain corresponds to 173 to 217 (AMGVEYPLVNVPSHRGLICNRSRTRHQEQPESSNMSICTNLSSRW). N-linked (GlcNAc...) asparagine glycosylation is found at asparagine 192, asparagine 206, and asparagine 212. Residues 218–242 (TVFQSSIFSAFVVYLVVLVSVAFMC) form a helical membrane-spanning segment. The Cytoplasmic segment spans residues 243–283 (WSMMQVLRRSKQGTLAAQGQQLQLRKLESQESRSARRQTII). Residues 284 to 305 (FLELIVVTLAVCWMPNQVRRIM) form a helical membrane-spanning segment. At 306–323 (AAAKPKHDWTKSYFRAYM) the chain is on the extracellular side. Residues 324-344 (ILLPFSDTFFYLSSVVNPLLY) traverse the membrane as a helical segment. Topologically, residues 345 to 454 (NVSSQQFRSV…TRNGFQEHEV (110 aa)) are cytoplasmic. Serine 397 is subject to Phosphoserine. The tract at residues 415-454 (HSEAKPESKPQELSCESPEPNSERKPANPATRNGFQEHEV) is disordered.

This sequence belongs to the G-protein coupled receptor 1 family. Interacts with HTR1A. Interacts with GALR1. As to expression, detected in liver, kidney, abomasum, uterus, small intestine and colon.

It localises to the cell membrane. In terms of biological role, zinc-sensing receptor that can sense changes in extracellular Zn(2+), mediate Zn(2+) signal transmission, and participates in the regulation of numerous physiological processes including glucose homeostasis regulation, gastrointestinal mobility, hormone secretion and cell death. Activation by Zn(2+) in keratinocytes increases the intracellular concentration of Ca(2+) and activates the ERK/MAPK and PI3K/AKT signaling pathways leading to epithelial repair. Plays an essential role in normal wound healing by inducing the production of cytokines including the major inflammatory cytokine IL6 via the PKC/MAPK/CEBPB pathway. Regulates adipose tissue metabolism, especially lipolysis, and regulates the function of lipases, such as hormone-sensitive lipase and adipose triglyceride lipase. Plays a role in the inhibition of cell death and protects against oxidative, endoplasmic reticulum and mitochondrial stress by inducing secretion of the cytoprotective pigment epithelium-derived growth factor (PEDF) and probably other protective transcripts in a GNA13/RHOA/SRE-dependent manner. Forms dynamic heteroreceptor complexes with HTR1A and GALR1 depending on cell type or specific physiological states, resulting in signaling diversity: HTR1A-GPR39 shows additive increase in signaling along the serum response element (SRE) and NF-kappa-B pathways while GALR1 acts as an antagonist blocking SRE. This chain is G-protein coupled receptor 39 (GPR39), found in Bos taurus (Bovine).